Here is a 245-residue protein sequence, read N- to C-terminus: Orotidine 5'-phosphate decarboxylase (245 aa).

Substrate-binding positions include aspartate 22, lysine 44, aspartate 71–threonine 80, threonine 131, arginine 192, glutamine 201, glycine 221, and arginine 222. Catalysis depends on lysine 73, which acts as the Proton donor.

The protein belongs to the OMP decarboxylase family. Type 1 subfamily. In terms of assembly, homodimer.

It carries out the reaction orotidine 5'-phosphate + H(+) = UMP + CO2. The protein operates within pyrimidine metabolism; UMP biosynthesis via de novo pathway; UMP from orotate: step 2/2. Catalyzes the decarboxylation of orotidine 5'-monophosphate (OMP) to uridine 5'-monophosphate (UMP). This is Orotidine 5'-phosphate decarboxylase from Shigella flexneri serotype 5b (strain 8401).